The primary structure comprises 88 residues: Small ribosomal subunit protein uS15 (88 aa).

This sequence belongs to the universal ribosomal protein uS15 family. In terms of assembly, part of the 30S ribosomal subunit. Forms a bridge to the 50S subunit in the 70S ribosome, contacting the 23S rRNA.

In terms of biological role, one of the primary rRNA binding proteins, it binds directly to 16S rRNA where it helps nucleate assembly of the platform of the 30S subunit by binding and bridging several RNA helices of the 16S rRNA. Its function is as follows. Forms an intersubunit bridge (bridge B4) with the 23S rRNA of the 50S subunit in the ribosome. This is Small ribosomal subunit protein uS15 from Albidiferax ferrireducens (strain ATCC BAA-621 / DSM 15236 / T118) (Rhodoferax ferrireducens).